A 58-amino-acid chain; its full sequence is Potassium channel toxin alpha-KTx 16.6 (58 aa).

A signal peptide spans 1-22 (MKILSVLLIALIICSINICSEA). Disulfide bonds link cysteine 29/cysteine 50, cysteine 35/cysteine 55, and cysteine 39/cysteine 57.

This sequence belongs to the short scorpion toxin superfamily. Potassium channel inhibitor family. Alpha-KTx 16 subfamily. Expressed by the venom gland.

The protein localises to the secreted. Functionally, inhibits potassium channel. In Buthus israelis (Israeli scorpion), this protein is Potassium channel toxin alpha-KTx 16.6.